The chain runs to 210 residues: 3-hexulose-6-phosphate synthase (210 aa).

Belongs to the HPS/KGPDC family. HPS subfamily.

The catalysed reaction is D-ribulose 5-phosphate + formaldehyde = D-arabino-hex-3-ulose 6-phosphate. The protein operates within one-carbon metabolism; formaldehyde assimilation via RuMP pathway; D-fructose 6-phosphate from D-ribulose 5-phosphate and formaldehyde: step 1/2. Catalyzes the condensation of ribulose 5-phosphate with formaldehyde to form 3-hexulose 6-phosphate. This is 3-hexulose-6-phosphate synthase from Staphylococcus aureus (strain USA300).